We begin with the raw amino-acid sequence, 506 residues long: Protein spinster homolog 1 (506 aa).

Residues 1–42 (MSQADADITPFFADDNEGEGPVENGVGSPLPEDEEEESPSGV) are disordered. A compositionally biased stretch (low complexity) spans 21–30 (PVENGVGSPL). Transmembrane regions (helical) follow at residues 52–71 (IVLC…VAGV), 87–107 (GLLQ…FGYL), 115–135 (LIMC…SFIG), 149–169 (VGVG…DLFV), 176–196 (MLSI…IVGS), 207–227 (WALR…MLVV), 266–286 (FGFT…PAFL), 310–330 (LIFG…GVQA), 344–364 (LVCA…IMFA), 373–393 (VFIF…ADIL), 408–428 (FQIV…IGVV), and 450–470 (LLCS…AVFI).

This sequence belongs to the major facilitator superfamily. Spinster (TC 2.A.1.49) family. Expressed in yolk cells.

The protein resides in the lysosome membrane. It catalyses the reaction a 1-acyl-sn-glycero-3-phosphocholine(out) + H(+)(out) = a 1-acyl-sn-glycero-3-phosphocholine(in) + H(+)(in). It carries out the reaction a 1-acyl-sn-glycero-3-phosphoethanolamine(out) + H(+)(out) = a 1-acyl-sn-glycero-3-phosphoethanolamine(in) + H(+)(in). The enzyme catalyses a 1-O-(1Z-alkenyl)-sn-glycero-3-phosphocholine(out) + H(+)(out) = a 1-O-(1Z-alkenyl)-sn-glycero-3-phosphocholine(in) + H(+)(in). The catalysed reaction is a 1-O-(1Z-alkenyl)-sn-glycero-3-phosphoethanolamine(out) + H(+)(out) = a 1-O-(1Z-alkenyl)-sn-glycero-3-phosphoethanolamine(in) + H(+)(in). Functionally, mediates the rate-limiting, proton-dependent, lysosomal efflux of lysophospholipids. Selective for zwitterionic headgroups such as lysophosphatidylcholine (LPC) and lysophosphatidylethanolamine (LPE). Essential player in lysosomal homeostasis. Critical for embryogenesis. Involved in the regulation of developmental senescence. This Danio rerio (Zebrafish) protein is Protein spinster homolog 1 (spns1).